The primary structure comprises 706 residues: Amino-acid acetyltransferase, mitochondrial (706 aa).

Disordered regions lie at residues 1-25 (MSSR…GAGD) and 367-403 (NPAN…PAKQ). Residues 1–35 (MSSRVLASRAAQPLKRHPTVVGAGDEAYPTPRRCF) constitute a mitochondrion transit peptide. Residues 367–388 (NPANNSQGESVVTNPISDSNAV) show a composition bias toward polar residues. The span at 389–401 (SESASTEPTSTPA) shows a compositional bias: low complexity. Positions 527-696 (TRPNMNLDDP…YEAVCRSIQP (170 aa)) constitute an N-acetyltransferase domain.

Belongs to the acetyltransferase family.

It is found in the mitochondrion. The catalysed reaction is L-glutamate + acetyl-CoA = N-acetyl-L-glutamate + CoA + H(+). It functions in the pathway amino-acid biosynthesis; L-arginine biosynthesis; N(2)-acetyl-L-ornithine from L-glutamate: step 1/4. Its function is as follows. N-acetylglutamate synthase involved in arginine biosynthesis. This Emericella nidulans (strain FGSC A4 / ATCC 38163 / CBS 112.46 / NRRL 194 / M139) (Aspergillus nidulans) protein is Amino-acid acetyltransferase, mitochondrial (arg2).